The sequence spans 322 residues: Zinc finger C2HC domain-containing protein zchc-1A (322 aa).

C2HC/C3H-type zinc fingers lie at residues 9–38 (PTFPCPICDRRFIKSSLEKHESACRKLASL) and 119–148 (DYVQCEYCSRNFNAAAAERHIPFCREQATR). Positions 13, 16, 28, 32, 123, 126, 138, and 142 each coordinate Zn(2+). Polar residues predominate over residues 150–159 (QGGNLKSSGG). Residues 150–322 (QGGNLKSSGG…SRNNSRSRIF (173 aa)) form a disordered region. Residues 174–220 (NEGKKQESSSRNGSAERKPTTRGRDGSLLRARRDDSNDITSRRKSLD) are compositionally biased toward basic and acidic residues. Composition is skewed to polar residues over residues 221–238 (TRTSLTTGQASNRHTSLS) and 264–274 (LQQSSTPQQRL). Low complexity predominate over residues 276-295 (TPASTTTTASRSGSRTSSRA). Basic and acidic residues predominate over residues 296-305 (CPRDDSRDSR). Residues 311-322 (NNSRNNSRSRIF) are compositionally biased toward low complexity.

It belongs to the ZC2HC1 family. Zn(2+) serves as cofactor.

The chain is Zinc finger C2HC domain-containing protein zchc-1A from Caenorhabditis elegans.